Consider the following 86-residue polypeptide: Small ribosomal subunit protein uS17 (86 aa).

This sequence belongs to the universal ribosomal protein uS17 family. In terms of assembly, part of the 30S ribosomal subunit.

Functionally, one of the primary rRNA binding proteins, it binds specifically to the 5'-end of 16S ribosomal RNA. The polypeptide is Small ribosomal subunit protein uS17 (Streptococcus pyogenes serotype M3 (strain ATCC BAA-595 / MGAS315)).